We begin with the raw amino-acid sequence, 666 residues long: Long chain acyl-CoA synthetase 5 (666 aa).

228 to 239 is an ATP binding site; that stretch reads IMYTSGTTGDPK. The segment at 495–519 is fatty acid-binding; that stretch reads DGWLHTGDVGEWQPNGSMKIIDRKK.

The protein belongs to the ATP-dependent AMP-binding enzyme family. The cofactor is Mg(2+).

It catalyses the reaction a long-chain fatty acid + ATP + CoA = a long-chain fatty acyl-CoA + AMP + diphosphate. Its pathway is lipid metabolism; fatty acid metabolism. Functionally, activation of long-chain fatty acids for both synthesis of cellular lipids, and degradation via beta-oxidation. Preferentially uses palmitate, palmitoleate, oleate and linoleate. The chain is Long chain acyl-CoA synthetase 5 (LACS5) from Arabidopsis thaliana (Mouse-ear cress).